The primary structure comprises 159 residues: NADH dehydrogenase [ubiquinone] 1 beta subcomplex subunit 10 (159 aa).

This sequence belongs to the complex I NDUFB10 subunit family. In terms of assembly, complex I is composed of 45 different subunits.

It localises to the mitochondrion inner membrane. Accessory subunit of the mitochondrial membrane respiratory chain NADH dehydrogenase (Complex I), that is believed not to be involved in catalysis. Complex I functions in the transfer of electrons from NADH to the respiratory chain. The immediate electron acceptor for the enzyme is believed to be ubiquinone. The polypeptide is NADH dehydrogenase [ubiquinone] 1 beta subcomplex subunit 10 (Bombyx mori (Silk moth)).